The following is a 230-amino-acid chain: E3 ubiquitin-protein ligase RNF114 (230 aa).

An RING-type zinc finger spans residues 31–70; sequence CPVCLEVYEKPVQVPCGHVFCSACLQECLKPKKPVCGVCR. Residues Cys93 and Cys96 each coordinate Zn(2+). The C2HC RNF-type zinc-finger motif lies at 93–112; the sequence is CHGCRKNFFLSKIRAHVATC. Residue Lys104 is modified to N6-acetyllysine. The Zn(2+) site is built by His108 and Cys112. The residue at position 114 (Lys114) is an N6-acetyllysine.

Interacts with XAF1, the interaction increases XAF1 stability and proapoptotic effects, and may regulate IFN signaling. In terms of processing, autoubiquitinated. Polyubiquitinated in the presence of E2 enzymes UBE2D1, UBE2D2 and UBE2D3, but only monoubiquitinated in the presence of UBE2E1.

It is found in the cytoplasm. It localises to the nucleus. It carries out the reaction S-ubiquitinyl-[E2 ubiquitin-conjugating enzyme]-L-cysteine + [acceptor protein]-L-lysine = [E2 ubiquitin-conjugating enzyme]-L-cysteine + N(6)-ubiquitinyl-[acceptor protein]-L-lysine.. It participates in protein modification; protein ubiquitination. Its function is as follows. E3 ubiquitin-protein ligase that promotes the ubiquitination of various substrates. In turn, participates in the regulation of many biological processes including cell cycle, apoptosis, osteoclastogenesis as well as innate or adaptive immunity. Acts as negative regulator of NF-kappa-B-dependent transcription by promoting the ubiquitination and stabilization of the NF-kappa-B inhibitor TNFAIP3. May promote the ubiquitination of TRAF6 as well. Also acts as a negative regulator of T-cell activation. Inhibits cellular dsRNA responses and interferon production by targeting MAVS component for proteasomal degradation. Ubiquitinates the CDK inhibitor CDKN1A leading to its degradationand probably also CDKN1B and CDKN1C. This activity stimulates cell cycle G1-to-S phase transition and suppresses cellular senescence. May play a role in spermatogenesis. The polypeptide is E3 ubiquitin-protein ligase RNF114 (RNF114) (Bos taurus (Bovine)).